Consider the following 199-residue polypeptide: Octanoyltransferase (199 aa).

The BPL/LPL catalytic domain maps to 27-199 (SNSCDELWLL…FVQYFLTQFK (173 aa)). Substrate contacts are provided by residues 66-73 (RGGQVTYH), 133-135 (SIG), and 146-148 (GIA). Cys-164 functions as the Acyl-thioester intermediate in the catalytic mechanism.

Belongs to the LipB family.

The protein localises to the cytoplasm. The enzyme catalyses octanoyl-[ACP] + L-lysyl-[protein] = N(6)-octanoyl-L-lysyl-[protein] + holo-[ACP] + H(+). Its pathway is protein modification; protein lipoylation via endogenous pathway; protein N(6)-(lipoyl)lysine from octanoyl-[acyl-carrier-protein]: step 1/2. Functionally, catalyzes the transfer of endogenously produced octanoic acid from octanoyl-acyl-carrier-protein onto the lipoyl domains of lipoate-dependent enzymes. Lipoyl-ACP can also act as a substrate although octanoyl-ACP is likely to be the physiological substrate. This is Octanoyltransferase from Legionella pneumophila (strain Corby).